A 167-amino-acid polypeptide reads, in one-letter code: RNA pyrophosphohydrolase (167 aa).

The region spanning 7 to 160 is the Nudix hydrolase domain; it reads PYRPCVGVMV…KRRAYEEVVA (154 aa). A Nudix box motif is present at residues 48-69; it reads GGIDEGEDPLEAACRELYEETG.

The protein belongs to the Nudix hydrolase family. RppH subfamily. The cofactor is a divalent metal cation.

Functionally, accelerates the degradation of transcripts by removing pyrophosphate from the 5'-end of triphosphorylated RNA, leading to a more labile monophosphorylated state that can stimulate subsequent ribonuclease cleavage. In Rhizobium meliloti (strain 1021) (Ensifer meliloti), this protein is RNA pyrophosphohydrolase.